We begin with the raw amino-acid sequence, 136 residues long: Ribosome-binding factor A (136 aa).

It belongs to the RbfA family. Monomer. Binds 30S ribosomal subunits, but not 50S ribosomal subunits or 70S ribosomes.

It localises to the cytoplasm. Its function is as follows. One of several proteins that assist in the late maturation steps of the functional core of the 30S ribosomal subunit. Associates with free 30S ribosomal subunits (but not with 30S subunits that are part of 70S ribosomes or polysomes). Required for efficient processing of 16S rRNA. May interact with the 5'-terminal helix region of 16S rRNA. This Photorhabdus laumondii subsp. laumondii (strain DSM 15139 / CIP 105565 / TT01) (Photorhabdus luminescens subsp. laumondii) protein is Ribosome-binding factor A.